The following is a 259-amino-acid chain: Ubiquitin-conjugating enzyme E2 J2 (259 aa).

Residues methionine 1 to histidine 226 are Cytoplasmic-facing. The UBC core domain maps to threonine 12–glutamate 162. Cysteine 94 acts as the Glycyl thioester intermediate in catalysis. Residues glycine 227 to tyrosine 247 traverse the membrane as a helical; Anchor for type IV membrane protein segment. Over threonine 248–glutamate 259 the chain is Lumenal.

It belongs to the ubiquitin-conjugating enzyme family. In terms of processing, auto-ubiquitinated.

Its subcellular location is the endoplasmic reticulum membrane. It catalyses the reaction S-ubiquitinyl-[E1 ubiquitin-activating enzyme]-L-cysteine + [E2 ubiquitin-conjugating enzyme]-L-cysteine = [E1 ubiquitin-activating enzyme]-L-cysteine + S-ubiquitinyl-[E2 ubiquitin-conjugating enzyme]-L-cysteine.. The protein operates within protein modification; protein ubiquitination. Its function is as follows. Catalyzes the covalent attachment of ubiquitin to other proteins. Seems to function in the selective degradation of misfolded membrane proteins from the endoplasmic reticulum (ERAD). In cooperation with the GATOR2 complex, catalyzes 'Lys-6'-linked ubiquitination of NPRL2. The polypeptide is Ubiquitin-conjugating enzyme E2 J2 (UBE2J2) (Homo sapiens (Human)).